We begin with the raw amino-acid sequence, 267 residues long: Pre-protein VI (267 aa).

Positions 1–33 (MEDINFASLAPRHGSRPFMGTWNEIGTSQLNGG) are excised as a propeptide. The interval 34–54 (AFSWSSLWSGIKNFGSSIKSF) is amphipathic alpha-helix essential for membrane lytic activity. The involved in endosomal membrane lysis stretch occupies residues 36–53 (SWSSLWSGIKNFGSSIKS). The tract at residues 48–74 (GSSIKSFGNKAWNSNTGQMLRDKLKDQ) is interaction with hexon protein. Residues 67-76 (LRDKLKDQNF) carry the Nuclear export signal motif. Disordered regions lie at residues 107–184 (LENS…PMTK) and 199–230 (KPVT…PTAP). Basic and acidic residues-rich tracts occupy residues 123 to 135 (PKVE…EKLP) and 146 to 155 (KGEKRPRPDL). The Nuclear localization signal motif lies at 149–153 (KRPRP). The PPXY motif motif lies at 166-169 (PPSY). A compositionally biased stretch (pro residues) spans 205–217 (LPPPVPTVPPMPA). The segment covering 218–230 (PTLGTAVSRPTAP) has biased composition (low complexity). Residues 248–259 (STLNSIVGLGVK) carry the Nuclear export signal motif. Positions 250 to 256 (LNSIVGL) are interaction with hexon protein. A binds to importin alpha/beta, involved in hexon nuclear import region spans residues 257 to 267 (GVKSLKRRRCY). Positions 262-265 (KRRR) match the Nuclear localization signal motif.

The protein belongs to the adenoviridae protein VI family. Interacts with hexon protein; this interaction allows nuclear import of hexon trimers and possibly pre-capsid assembly. Interacts (via C-terminal NLS) with importin alpha/beta. In terms of assembly, interacts (via PPxY motif) with host NEDD4 ubiquitine ligase; this interaction might play a role in virus intracellular transport during entry. Part of a complex composed of the core-capsid bridging protein, the endosome lysis protein VI and the hexon-linking protein VIII; these interactions bridge the virus core to the capsid. Interacts with peripentonal hexons; this interaction stabilizes the capsid by gluing two peripentonal hexons together and joining them with an adjacent group-of-nine hexon. As to quaternary structure, heterodimer with the viral protease; disulfide-linked. Interacts with the viral protease. Ubiquitinated by Nedd4 following partial capsid disassembly; which might play a role in intracellular virus movement during entry. In terms of processing, contains the major nuclear import and export signals. Proteolytically removed during virion maturation. The processing of the C-terminus turns the precursor into a mature viral structural protein and abrogates its ability to promote hexon import and act as a potential chaperone protein.

It is found in the host nucleus. The protein resides in the host cytoplasm. The protein localises to the virion. In terms of biological role, during virus assembly, promotes hexon trimers nuclear import through nuclear pore complexes via an importin alpha/beta-dependent mechanism. By analogy to herpesviruses capsid assembly, might act as a chaperone to promote the formation of the icosahedral capsid. Functionally, structural component of the virion that provides increased stability to the particle shell through its interaction with the core-capsid bridging protein and the hexon-linking protein VIII. Fibers shedding during virus entry into host cell allows the endosome lysis protein to be exposed as a membrane-lytic peptide. Exhibits pH-independent membrane fragmentation activity and probably mediates viral rapid escape from host endosome via organellar membrane lysis. It is not clear if it then remains partially associated with the capsid and involved in the intracellular microtubule-dependent transport of capsid to the nucleus, or if it is lost during endosomal penetration. Cofactor that activates the viral protease. Binds to viral protease in a 1:1 ratio. This chain is Pre-protein VI, found in Homo sapiens (Human).